The sequence spans 132 residues: Small ribosomal subunit protein uS8 (132 aa).

The protein belongs to the universal ribosomal protein uS8 family. In terms of assembly, part of the 30S ribosomal subunit. Contacts proteins S5 and S12.

Its function is as follows. One of the primary rRNA binding proteins, it binds directly to 16S rRNA central domain where it helps coordinate assembly of the platform of the 30S subunit. This is Small ribosomal subunit protein uS8 from Renibacterium salmoninarum (strain ATCC 33209 / DSM 20767 / JCM 11484 / NBRC 15589 / NCIMB 2235).